The following is a 266-amino-acid chain: Tryptophan synthase alpha chain (266 aa).

Catalysis depends on proton acceptor residues E49 and D60.

Belongs to the TrpA family. As to quaternary structure, tetramer of two alpha and two beta chains.

It catalyses the reaction (1S,2R)-1-C-(indol-3-yl)glycerol 3-phosphate + L-serine = D-glyceraldehyde 3-phosphate + L-tryptophan + H2O. It participates in amino-acid biosynthesis; L-tryptophan biosynthesis; L-tryptophan from chorismate: step 5/5. In terms of biological role, the alpha subunit is responsible for the aldol cleavage of indoleglycerol phosphate to indole and glyceraldehyde 3-phosphate. This chain is Tryptophan synthase alpha chain, found in Opitutus terrae (strain DSM 11246 / JCM 15787 / PB90-1).